Consider the following 406-residue polypeptide: Putative cfxQ-like protein R730 (406 aa).

The tract at residues 1–37 is disordered; the sequence is MKRSHDSITRSINSDNDSETNMNSDNNNNNKPNQRKK. The span at 13–32 shows a compositional bias: low complexity; the sequence is NSDNDSETNMNSDNNNNNKP. 173 to 180 contributes to the ATP binding site; it reads GPPGVGKS.

Belongs to the CbxX/CfxQ family.

This Acanthamoeba polyphaga mimivirus (APMV) protein is Putative cfxQ-like protein R730.